Reading from the N-terminus, the 430-residue chain is Adenylosuccinate synthetase (430 aa).

Residues 13–19 (GDEGKGK) and 41–43 (GHT) contribute to the GTP site. Asp-14 (proton acceptor) is an active-site residue. 2 residues coordinate Mg(2+): Asp-14 and Gly-41. IMP is bound by residues 14-17 (DEGK), 39-42 (NAGH), Thr-130, Arg-144, Gln-225, Thr-240, and Arg-304. Catalysis depends on His-42, which acts as the Proton donor. Residue 300 to 306 (ASTGRPR) participates in substrate binding. GTP contacts are provided by residues Arg-306, 332-334 (KLD), and 414-416 (STG).

This sequence belongs to the adenylosuccinate synthetase family. As to quaternary structure, homodimer. The cofactor is Mg(2+).

The protein resides in the cytoplasm. It catalyses the reaction IMP + L-aspartate + GTP = N(6)-(1,2-dicarboxyethyl)-AMP + GDP + phosphate + 2 H(+). It functions in the pathway purine metabolism; AMP biosynthesis via de novo pathway; AMP from IMP: step 1/2. In terms of biological role, plays an important role in the de novo pathway of purine nucleotide biosynthesis. Catalyzes the first committed step in the biosynthesis of AMP from IMP. This is Adenylosuccinate synthetase from Xanthomonas campestris pv. campestris (strain 8004).